The following is a 393-amino-acid chain: 1-deoxy-D-xylulose 5-phosphate reductoisomerase (393 aa).

NADPH is bound by residues threonine 10, glycine 11, serine 12, isoleucine 13, glutamine 38, and asparagine 124. Residue lysine 125 participates in 1-deoxy-D-xylulose 5-phosphate binding. NADPH is bound at residue glutamate 126. Residue aspartate 150 coordinates Mn(2+). Residues serine 151, glutamate 152, serine 179, and histidine 202 each coordinate 1-deoxy-D-xylulose 5-phosphate. Glutamate 152 contributes to the Mn(2+) binding site. Residue glycine 208 coordinates NADPH. 1-deoxy-D-xylulose 5-phosphate-binding residues include serine 215, asparagine 220, lysine 221, and glutamate 224. Position 224 (glutamate 224) interacts with Mn(2+).

It belongs to the DXR family. Mg(2+) serves as cofactor. It depends on Mn(2+) as a cofactor.

The enzyme catalyses 2-C-methyl-D-erythritol 4-phosphate + NADP(+) = 1-deoxy-D-xylulose 5-phosphate + NADPH + H(+). Its pathway is isoprenoid biosynthesis; isopentenyl diphosphate biosynthesis via DXP pathway; isopentenyl diphosphate from 1-deoxy-D-xylulose 5-phosphate: step 1/6. Functionally, catalyzes the NADPH-dependent rearrangement and reduction of 1-deoxy-D-xylulose-5-phosphate (DXP) to 2-C-methyl-D-erythritol 4-phosphate (MEP). This chain is 1-deoxy-D-xylulose 5-phosphate reductoisomerase, found in Ralstonia nicotianae (strain ATCC BAA-1114 / GMI1000) (Ralstonia solanacearum).